The chain runs to 112 residues: uncharacterized protein (112 aa).

The next 2 membrane-spanning stretches (helical) occupy residues 33–53 (IIGI…MIIF) and 69–89 (MNNI…HITV).

It is found in the membrane. This is an uncharacterized protein from Saccharomyces cerevisiae (strain ATCC 204508 / S288c) (Baker's yeast).